A 208-amino-acid polypeptide reads, in one-letter code: Uracil phosphoribosyltransferase (208 aa).

5-phospho-alpha-D-ribose 1-diphosphate is bound by residues arginine 78, arginine 103, and aspartate 130–threonine 138. Uracil is bound by residues isoleucine 193 and glycine 198–alanine 200. Aspartate 199 lines the 5-phospho-alpha-D-ribose 1-diphosphate pocket.

The protein belongs to the UPRTase family. Mg(2+) serves as cofactor.

The catalysed reaction is UMP + diphosphate = 5-phospho-alpha-D-ribose 1-diphosphate + uracil. It functions in the pathway pyrimidine metabolism; UMP biosynthesis via salvage pathway; UMP from uracil: step 1/1. Its activity is regulated as follows. Allosterically activated by GTP. Functionally, catalyzes the conversion of uracil and 5-phospho-alpha-D-ribose 1-diphosphate (PRPP) to UMP and diphosphate. This chain is Uracil phosphoribosyltransferase, found in Desulforapulum autotrophicum (strain ATCC 43914 / DSM 3382 / VKM B-1955 / HRM2) (Desulfobacterium autotrophicum).